The primary structure comprises 354 residues: Biotin synthase (354 aa).

A Radical SAM core domain is found at 41–265; sequence NEVQISRLLS…LMPHSRVRLS (225 aa). [4Fe-4S] cluster-binding residues include cysteine 56, cysteine 60, and cysteine 63. [2Fe-2S] cluster contacts are provided by cysteine 100, cysteine 131, cysteine 191, and arginine 263.

The protein belongs to the radical SAM superfamily. Biotin synthase family. In terms of assembly, homodimer. It depends on [4Fe-4S] cluster as a cofactor. The cofactor is [2Fe-2S] cluster.

It catalyses the reaction (4R,5S)-dethiobiotin + (sulfur carrier)-SH + 2 reduced [2Fe-2S]-[ferredoxin] + 2 S-adenosyl-L-methionine = (sulfur carrier)-H + biotin + 2 5'-deoxyadenosine + 2 L-methionine + 2 oxidized [2Fe-2S]-[ferredoxin]. It functions in the pathway cofactor biosynthesis; biotin biosynthesis; biotin from 7,8-diaminononanoate: step 2/2. Catalyzes the conversion of dethiobiotin (DTB) to biotin by the insertion of a sulfur atom into dethiobiotin via a radical-based mechanism. This is Biotin synthase from Shewanella woodyi (strain ATCC 51908 / MS32).